The sequence spans 626 residues: Kinesin-like protein Klp59C (626 aa).

The interval 1-183 (MDKLSIEQKI…VRSGTTNERI (183 aa)) is globular. Residues 68–155 (CSGGNAASAN…GKNEDPGNPN (88 aa)) are disordered. Over residues 72–96 (NAASANQTASISPRSMKQRIATGSL) the composition is skewed to polar residues. The span at 101–112 (ATAPPRQQTAPP) shows a compositional bias: low complexity. Residues 113–150 (VREDEVVHQAERMRKERERRREAQARTRLDREQGKNED) show a composition bias toward basic and acidic residues. Residues 115-150 (EDEVVHQAERMRKERERRREAQARTRLDREQGKNED) adopt a coiled-coil conformation. The 335-residue stretch at 187 to 521 (QIMVCVRKRP…LRYADRVKEL (335 aa)) folds into the Kinesin motor domain. 277–284 (GQTGSGKT) is an ATP binding site. The segment at 557-608 (ASSTSMPGGGNQAQQHTNTANDLNRSQKPTSKPTYPTSGQQLVQRKGSSQRE) is disordered.

Belongs to the TRAFAC class myosin-kinesin ATPase superfamily. Kinesin family. MCAK/KIF2 subfamily.

Its subcellular location is the chromosome. The protein localises to the centromere. It is found in the kinetochore. The protein resides in the cytoplasm. It localises to the cytoskeleton. Its subcellular location is the spindle pole. Its function is as follows. Required during anaphase to drive sister chromatid separation to actively depolymerize kinetochore microtubules at their kinetochore-associated plus ends, thereby contributing to chromatid mobility through a 'Pac-man' mechanism. This chain is Kinesin-like protein Klp59C (Klp59C), found in Drosophila melanogaster (Fruit fly).